We begin with the raw amino-acid sequence, 566 residues long: APC membrane recruitment protein 2 (566 aa).

Disordered regions lie at residues 120-176, 192-237, 277-307, and 342-533; these read KKNG…PGLI, TQKP…SPCS, VTGCGDVIADQDDDGGSSMGSKLVPGNGKKV, and MIPP…RTKI. Basic and acidic residues-rich tracts occupy residues 123–134, 155–168, and 192–204; these read GKSENVRGEQAE, SKKDKSYKDDKEGA, and TQKPLCEKGKSTE. 2 stretches are compositionally biased toward basic and acidic residues: residues 364–377 and 389–411; these read REVKCSDSAQDRNA and YRKERGDQNSKANEKRQCLRNSD. A compositionally biased stretch (low complexity) spans 464–476; it reads PPLSHSHSKPLSP. Polar residues-rich tracts occupy residues 477–489 and 504–517; these read VTTSCPVKTASSN and HTTNQGTDSSSGSA.

It belongs to the Amer family.

The protein resides in the cell membrane. In terms of biological role, negative regulator of the canonical Wnt signaling pathway involved in neuroectodermal patterning. Acts by specifically binding phosphatidylinositol 4,5-bisphosphate (PtdIns(4,5)P2), translocating to the cell membrane and interacting with key regulators of the canonical Wnt signaling pathway, such as components of the beta-catenin destruction complex. The protein is APC membrane recruitment protein 2 (amer2) of Xenopus tropicalis (Western clawed frog).